The primary structure comprises 420 residues: Serine hydroxymethyltransferase (420 aa).

Residues Leu118 and 122 to 124 each bind (6S)-5,6,7,8-tetrahydrofolate; that span reads GHL. Lys227 carries the post-translational modification N6-(pyridoxal phosphate)lysine.

The protein belongs to the SHMT family. As to quaternary structure, homodimer. Pyridoxal 5'-phosphate is required as a cofactor.

Its subcellular location is the cytoplasm. It carries out the reaction (6R)-5,10-methylene-5,6,7,8-tetrahydrofolate + glycine + H2O = (6S)-5,6,7,8-tetrahydrofolate + L-serine. Its pathway is one-carbon metabolism; tetrahydrofolate interconversion. It participates in amino-acid biosynthesis; glycine biosynthesis; glycine from L-serine: step 1/1. In terms of biological role, catalyzes the reversible interconversion of serine and glycine with tetrahydrofolate (THF) serving as the one-carbon carrier. This reaction serves as the major source of one-carbon groups required for the biosynthesis of purines, thymidylate, methionine, and other important biomolecules. Also exhibits THF-independent aldolase activity toward beta-hydroxyamino acids, producing glycine and aldehydes, via a retro-aldol mechanism. The sequence is that of Serine hydroxymethyltransferase from Persephonella marina (strain DSM 14350 / EX-H1).